The primary structure comprises 244 residues: Adenosylcobinamide-GDP ribazoletransferase (244 aa).

5 helical membrane passes run 33–53 (WFAV…WLGA), 57–77 (PWLA…GLHL), 109–129 (FAVI…MLAV), 132–152 (GVGW…AVWW), and 176–196 (FWLS…VLLL).

This sequence belongs to the CobS family. Mg(2+) is required as a cofactor.

The protein resides in the cell inner membrane. It catalyses the reaction alpha-ribazole + adenosylcob(III)inamide-GDP = adenosylcob(III)alamin + GMP + H(+). The enzyme catalyses alpha-ribazole 5'-phosphate + adenosylcob(III)inamide-GDP = adenosylcob(III)alamin 5'-phosphate + GMP + H(+). Its pathway is cofactor biosynthesis; adenosylcobalamin biosynthesis; adenosylcobalamin from cob(II)yrinate a,c-diamide: step 7/7. In terms of biological role, joins adenosylcobinamide-GDP and alpha-ribazole to generate adenosylcobalamin (Ado-cobalamin). Also synthesizes adenosylcobalamin 5'-phosphate from adenosylcobinamide-GDP and alpha-ribazole 5'-phosphate. This Laribacter hongkongensis (strain HLHK9) protein is Adenosylcobinamide-GDP ribazoletransferase.